A 131-amino-acid polypeptide reads, in one-letter code: Large ribosomal subunit protein eL32 (131 aa).

The protein belongs to the eukaryotic ribosomal protein eL32 family. As to quaternary structure, component of the large ribosomal subunit (LSU). Mature N.crassa ribosomes consist of a small (40S) and a large (60S) subunit. The 40S small subunit contains 1 molecule of ribosomal RNA (18S rRNA) and at least 32 different proteins. The large 60S subunit contains 3 rRNA molecules (26S, 5.8S and 5S rRNA) and at least 42 different proteins.

It is found in the cytoplasm. Its function is as follows. Component of the ribosome, a large ribonucleoprotein complex responsible for the synthesis of proteins in the cell. The small ribosomal subunit (SSU) binds messenger RNAs (mRNAs) and translates the encoded message by selecting cognate aminoacyl-transfer RNA (tRNA) molecules. The large subunit (LSU) contains the ribosomal catalytic site termed the peptidyl transferase center (PTC), which catalyzes the formation of peptide bonds, thereby polymerizing the amino acids delivered by tRNAs into a polypeptide chain. The nascent polypeptides leave the ribosome through a tunnel in the LSU and interact with protein factors that function in enzymatic processing, targeting, and the membrane insertion of nascent chains at the exit of the ribosomal tunnel. The protein is Large ribosomal subunit protein eL32 (crp-63) of Neurospora crassa (strain ATCC 24698 / 74-OR23-1A / CBS 708.71 / DSM 1257 / FGSC 987).